A 132-amino-acid chain; its full sequence is MATRHQVRQSVISLLYAFELNSQNNVFVDEILDEKKIRNEQKNFTLNLYHGILDNLNNIDETLNSFLNDNQITALGHVERAILRLGAYELLFTNTPSAIVINEAIELAKELANDNSPKFMNGVLDALIKAKK.

The protein belongs to the NusB family.

Functionally, involved in transcription antitermination. Required for transcription of ribosomal RNA (rRNA) genes. Binds specifically to the boxA antiterminator sequence of the ribosomal RNA (rrn) operons. The protein is Transcription antitermination protein NusB of Campylobacter jejuni subsp. doylei (strain ATCC BAA-1458 / RM4099 / 269.97).